The primary structure comprises 292 residues: Probable phytol kinase 2, chloroplastic (292 aa).

The N-terminal 49 residues, 1-49 (MAAAAAWTGAASPNSLLLSRSPPHAAALAPSPGSSMRRRLLLGVGTPAV), are a transit peptide targeting the chloroplast. Helical transmembrane passes span 98–118 (VVHV…SNST), 120–142 (ARYF…GLRL), 148–168 (LELL…VLVF), 216–236 (FISG…LGYI), 243–263 (ALGK…VPVT), and 265–285 (VVDD…LLFS).

The protein belongs to the polyprenol kinase family.

Its subcellular location is the plastid. It is found in the chloroplast membrane. The catalysed reaction is phytol + CTP = phytyl phosphate + CDP + H(+). Its pathway is cofactor biosynthesis; tocopherol biosynthesis. Its function is as follows. Involved in the activation and reutilization of phytol from chlorophyll degradation in plant metabolism, including tocopherol biosynthesis. Catalyzes the conversion of phytol to phytol monophosphate (PMP). This chain is Probable phytol kinase 2, chloroplastic, found in Glycine max (Soybean).